The chain runs to 558 residues: MVDSGTEARARGKAEAGLQDGISGPATARVNGKTQAEAVAEAELKTESVTQAKAGDGAMTRTHTVTYREAMAVTREVIKVEDTTKTRVMVETKTKPLAERSIVPQTKSKAMPMSRVSTVTKSEVKVVAVIEANIRSYAKSHDKANTGSRPDRREETSIGMKSSDEDEENICSWFWTGEEPSVGSWFWPEEETSLQVYKPLPKIQEKPKPTHKPTLTIKQKVIAWSRARYIVLVPVEGGEQSLPPEGNWTLVETLIETPLGIRPLTKIPPYHGPYYQTLAEIKKQIRQREKYGPNPKACHCKSRGFSLEPKEFDKLVALLKLTKDPFIHEIATMIMGISPAYPFTQDIIHDVGITVMIENLVNNPNVKEHPGALSMVDDSSESSEEPKSGESYIHQVCKGIISCPLNSPVQLAGLKLLGHLSIKFEDHYVITSYIPDFLTLLNKGSVKTKFYVLKVFSCLSKNHANTRELISAKVLSSLVAPFNKNESKANILNIIEIFENINFQFKTKAKLFTKEKFTKSELISIFQEAKQFGQKLQDLAEHSDPEVRDKVIRLILKL.

2 stretches are compositionally biased toward basic and acidic residues: residues 1–14 (MVDS…RGKA) and 139–156 (KSHD…REET). Disordered regions lie at residues 1 to 35 (MVDS…GKTQ) and 139 to 165 (KSHD…SSDE). One copy of the ARM 1 repeat lies at 300-339 (CKSRGFSLEPKEFDKLVALLKLTKDPFIHEIATMIMGISP). Positions 369–388 (HPGALSMVDDSSESSEEPKS) are disordered. 3 ARM repeats span residues 422–461 (IKFE…CLSK), 463–503 (HANT…NINF), and 520–558 (SELI…ILKL).

Belongs to the eutherian X-chromosome-specific Armcx family.

This is Armadillo repeat-containing X-linked protein 5 (ARMCX5) from Homo sapiens (Human).